A 677-amino-acid chain; its full sequence is MIDQYKHQQLRIGSVSPQQISAWATKILPNGEIVGEVTKPYTFHYKTNKPEKDGLFCERIFGPIKSGICACGNYRVIGDEKEDPKFCEQCGVEFVDSRIRRYQMGYIKLACPVTHVWYLKRLPSYIANFLDKPLKELEGLVYCDFSFARPIAKKPTFLRLRGLFEYEIQSWKYSIPLFFTTQGFDTFRNREISTGAGAIREQLADLDLRTIIDYSFAEWKELGEEGSTGNEWEDRKVGRRKDFLVRRMELVKHFIRTNIEPEWMVLCLLPVLPPELRPIIQIDGGKLMSSDINELYRRVIYRNNTLTDLLSTSRSTPGELVMCQEKLVQEAVDTLLDNGIRGQPMRDGHNKVYKSFSDVIEGKEGRFRETLLGKRVDYSGRSVIVVGPSLSLHRCGLPREIAIELFQTFVIRGLIRQHLASNIGVAKRKIREKEPIVWKILQEVMQGHPVLLNRAPTLHRLGIQAFQPILVEGRAICLHPLVCKGFNADFDGDQMAVHVPLSLEAQAEARLLMFSHMNLLSPAIGDPISVPTQDMLIGLYILTSGNRRGICANRYNPWNHKTYQNERIDDTNYKSMKEPFFCNFYDAIGAYRQKRIHLDSPLWLRWQLDQRIIASKEAPIEVHYESLGTYHEIYAHYLIIRSVKKEIIDIYIRTTVGHISLYREIEEAIQGFYQACS.

Zn(2+) is bound by residues Cys-69, Cys-71, Cys-87, and Cys-90. Residues Asp-489, Asp-491, and Asp-493 each contribute to the Mg(2+) site.

It belongs to the RNA polymerase beta' chain family. RpoC1 subfamily. As to quaternary structure, in plastids the minimal PEP RNA polymerase catalytic core is composed of four subunits: alpha, beta, beta', and beta''. When a (nuclear-encoded) sigma factor is associated with the core the holoenzyme is formed, which can initiate transcription. The cofactor is Mg(2+). Requires Zn(2+) as cofactor.

Its subcellular location is the plastid. It localises to the chloroplast. It catalyses the reaction RNA(n) + a ribonucleoside 5'-triphosphate = RNA(n+1) + diphosphate. Its function is as follows. DNA-dependent RNA polymerase catalyzes the transcription of DNA into RNA using the four ribonucleoside triphosphates as substrates. The chain is DNA-directed RNA polymerase subunit beta' from Spinacia oleracea (Spinach).